We begin with the raw amino-acid sequence, 748 residues long: Structure-specific endonuclease subunit SLX4 (748 aa).

The tract at residues 50–102 (LSSDDDSISTQVKSVTAQKSPITQETTKNDTERNKDVDKSCNPVSTSQPDLGE) is disordered. Over residues 57–75 (ISTQVKSVTAQKSPITQET) the composition is skewed to polar residues. Phosphothreonine; by ATR and ATM is present on threonine 72. Residues 76–88 (TKNDTERNKDVDK) are compositionally biased toward basic and acidic residues. Threonine 113 is subject to Phosphothreonine; by ATR and ATM. 2 disordered regions span residues 215–236 (IKTQ…KGEK) and 277–303 (EKSS…PPEL). Basic and acidic residues predominate over residues 222 to 236 (NSDKPPRARNNKGEK). The span at 277–291 (EKSSSSLDNQESSQQ) shows a compositional bias: low complexity. Residue serine 289 is modified to Phosphoserine; by ATR and ATM. Threonine 319 is subject to Phosphothreonine; by ATR and ATM. A phosphoserine; by ATR and ATM mark is found at serine 329 and serine 355.

The protein belongs to the SLX4 family. In terms of assembly, forms a heterodimer with SLX1. Interacts with RAD1; catalytic subunit of the RAD1-RAD10 endonuclease. Interacts with RTT107. In terms of processing, phosphorylated by ATR (MEC1) and ATM (TEL1) upon DNA damage. This appears to be required for the function with the RAD1-RAD10 endonuclease.

It is found in the nucleus. The protein localises to the cytoplasm. Regulatory subunit that interacts with and increases the activity of different structure-specific endonucleases. Has several distinct roles in protecting genome stability by resolving diverse forms of deleterious DNA structures. Component of the SLX1-SLX4 structure-specific endonuclease that resolves DNA secondary structures generated during DNA repair and recombination. Has endonuclease activity towards branched DNA substrates, introducing single-strand cuts in duplex DNA close to junctions with ss-DNA. Has a preference for simple Y, 5'-flap and replication fork-like structures. It cleaves the strand bearing the 5'-non-homologous arm at the branch site junction and generates ligatable, nicked products from the 5'-flap or replication fork substrates. Plays a critical role in maintaining the integrity of the ribosomal DNA (rDNA) loci, where it has a role in re-starting stalled replication forks. Has Holliday junction resolvase activity in vitro. Interacts with the structure-specific RAD1-RAD10 endonuclease and promotes RAD1-RAD10-dependent 3'-non-homologous tail removal (NHTR) during repair of double-strand breaks by single-strand annealing. SLX4 also promotes recovery from DNA-alkylation-induced replisome stalling during DNA replication by facilitating the error-free mode of lesion bypass. This does not require SLX1 or RAD1-RAD10, but probably RTT107. The sequence is that of Structure-specific endonuclease subunit SLX4 from Saccharomyces cerevisiae (strain YJM789) (Baker's yeast).